Consider the following 428-residue polypeptide: Dihydrolipoyllysine-residue acetyltransferase component of pyruvate dehydrogenase complex (428 aa).

The Lipoyl-binding domain occupies 2 to 77; sequence AFEFKLPDIG…TVGQTLITLD (76 aa). Residue Lys-43 is modified to N6-lipoyllysine. Residues 88-123 form a disordered region; it reads GQEQEEAKKEEKTETVSKEEKVDAVAPNAPAAEAEA. Basic and acidic residues predominate over residues 89–110; it reads QEQEEAKKEEKTETVSKEEKVD. Residues 111–123 show a composition bias toward low complexity; that stretch reads AVAPNAPAAEAEA. In terms of domain architecture, Peripheral subunit-binding (PSBD) spans 130 to 167; that stretch reads IAMPSVRKYAREKGVDIRLVQGTGKNGRVLKEDIDAFL. Residues 177–194 show a composition bias toward low complexity; it reads AAEEKAAPAAAKPATTEG. Residues 177-201 are disordered; sequence AAEEKAAPAAAKPATTEGEFPETRE. The active site involves His-399.

It belongs to the 2-oxoacid dehydrogenase family. Forms a 60-polypeptide structural core with icosahedral symmetry. It depends on (R)-lipoate as a cofactor.

The catalysed reaction is N(6)-[(R)-dihydrolipoyl]-L-lysyl-[protein] + acetyl-CoA = N(6)-[(R)-S(8)-acetyldihydrolipoyl]-L-lysyl-[protein] + CoA. In terms of biological role, the pyruvate dehydrogenase complex catalyzes the overall conversion of pyruvate to acetyl-CoA and CO(2). It contains multiple copies of three enzymatic components: pyruvate dehydrogenase (E1), dihydrolipoamide acetyltransferase (E2) and lipoamide dehydrogenase (E3). The sequence is that of Dihydrolipoyllysine-residue acetyltransferase component of pyruvate dehydrogenase complex (pdhC) from Geobacillus stearothermophilus (Bacillus stearothermophilus).